A 36-amino-acid chain; its full sequence is Pancreatic polypeptide (36 aa).

Residue Tyr-36 is modified to Tyrosine amide.

The protein belongs to the NPY family.

It is found in the secreted. In terms of biological role, hormone secreted by pancreatic cells that acts as a regulator of pancreatic and gastrointestinal functions probably by signaling through the G protein-coupled receptor NPY4R2. The sequence is that of Pancreatic polypeptide (PPY) from Tapirus pinchaque (Mountain tapir).